We begin with the raw amino-acid sequence, 95 residues long: Feather keratin B-4 (95 aa).

An N-acetylserine modification is found at Ser1.

Belongs to the avian keratin family. In terms of assembly, the avian keratins (F-ker, S-ker, C-ker and B-ker) are a complex mixture of very similar polypeptides.

This Anas platyrhynchos (Mallard) protein is Feather keratin B-4.